The sequence spans 60 residues: Large ribosomal subunit protein bL32 (60 aa).

A compositionally biased stretch (basic residues) spans 1–16; the sequence is MAVPRRKTSPSRRGMR. A disordered region spans residues 1-60; it reads MAVPRRKTSPSRRGMRRSADALKRPTYAEDKDSGELRRPHHLDLKTGMYKGRQVIKKKDA. Positions 17–44 are enriched in basic and acidic residues; it reads RSADALKRPTYAEDKDSGELRRPHHLDL.

It belongs to the bacterial ribosomal protein bL32 family.

This is Large ribosomal subunit protein bL32 from Rhodopseudomonas palustris (strain BisB5).